A 331-amino-acid polypeptide reads, in one-letter code: Probable staphylococcal-like nuclease CAN1 (331 aa).

A lipid anchor (N-myristoyl glycine) is attached at Gly2. Cys10 carries the S-palmitoyl cysteine lipid modification. One can recognise a TNase-like domain in the interval 136 to 313; it reads HTLPVDAKAV…QSGRKGLWAA (178 aa). Asp149 provides a ligand contact to Ca(2+). The active site involves Arg220. Residue Asp225 participates in Ca(2+) binding. Active-site residues include Glu228 and Arg262. Positions 306-331 are disordered; it reads GRKGLWAASRPQKPWEWRRDKRNGTA. Residues 318 to 331 are compositionally biased toward basic and acidic residues; the sequence is KPWEWRRDKRNGTA.

Belongs to the thermonuclease family. Ca(2+) is required as a cofactor.

Its subcellular location is the cell membrane. In terms of biological role, enzyme that catalyzes the hydrolysis of both DNA and RNA at the 5' position of the phosphodiester bond. The chain is Probable staphylococcal-like nuclease CAN1 from Oryza sativa subsp. japonica (Rice).